Here is a 149-residue protein sequence, read N- to C-terminus: MRYNEKELLCLSRQRAEKAAELGMRGPKKGSVLKKRLVKLVVNFLFYFRIDEEEPIGALLLEHCRVSKEDEKGFSIHFIDEPEKKYMFECSSQEQCVEWVEALTNASYEFMRRSLMFYRNEILKMTGKDPLEQYGISGESRFQLENASL.

In terms of domain architecture, PH spans 15–108 (RAEKAAELGM…WVEALTNASY (94 aa)).

In Xenopus laevis (African clawed frog), this protein is Pleckstrin homology domain-containing family J member 1 (plekhj1).